We begin with the raw amino-acid sequence, 189 residues long: Thymidine kinase (189 aa).

ATP-binding positions include 9–16 and 85–88; these read GTMNSGKS and DEAQ. E86 acts as the Proton acceptor in catalysis. 4 residues coordinate Zn(2+): C143, C146, C180, and H183.

Belongs to the thymidine kinase family. In terms of assembly, homotetramer.

It is found in the cytoplasm. It catalyses the reaction thymidine + ATP = dTMP + ADP + H(+). The chain is Thymidine kinase from Lactococcus lactis subsp. lactis (strain IL1403) (Streptococcus lactis).